The sequence spans 429 residues: Adenylosuccinate synthetase (429 aa).

Residues 12–18 (GDEGKGK) and 40–42 (GHT) contribute to the GTP site. Asp13 serves as the catalytic Proton acceptor. Mg(2+)-binding residues include Asp13 and Gly40. IMP is bound by residues 13–16 (DEGK), 38–41 (NAGH), Thr129, Arg143, Gln223, Thr238, and Arg302. His41 functions as the Proton donor in the catalytic mechanism. A substrate-binding site is contributed by 298 to 304 (VVTGRKR). Residues Arg304, 330–332 (KLD), and 412–414 (STS) each bind GTP.

It belongs to the adenylosuccinate synthetase family. In terms of assembly, homodimer. Requires Mg(2+) as cofactor.

It localises to the cytoplasm. It carries out the reaction IMP + L-aspartate + GTP = N(6)-(1,2-dicarboxyethyl)-AMP + GDP + phosphate + 2 H(+). The protein operates within purine metabolism; AMP biosynthesis via de novo pathway; AMP from IMP: step 1/2. Its function is as follows. Plays an important role in the de novo pathway of purine nucleotide biosynthesis. Catalyzes the first committed step in the biosynthesis of AMP from IMP. The protein is Adenylosuccinate synthetase of Bartonella bacilliformis (strain ATCC 35685 / KC583 / Herrer 020/F12,63).